We begin with the raw amino-acid sequence, 65 residues long: uncharacterized protein (65 aa).

This is an uncharacterized protein from Saccharomyces cerevisiae (strain ATCC 204508 / S288c) (Baker's yeast).